Reading from the N-terminus, the 542-residue chain is Glutamyl-tRNA(Gln) amidotransferase subunit B, mitochondrial (542 aa).

Residues 1 to 66 (MRVFRRFYQV…PNSHTSFFDI (66 aa)) constitute a mitochondrion transit peptide.

Belongs to the GatB/GatE family. GatB subfamily. Subunit of the heterotrimeric GatFAB amidotransferase (AdT) complex, composed of A, B and F subunits.

The protein resides in the mitochondrion. It carries out the reaction L-glutamyl-tRNA(Gln) + L-glutamine + ATP + H2O = L-glutaminyl-tRNA(Gln) + L-glutamate + ADP + phosphate + H(+). Allows the formation of correctly charged Gln-tRNA(Gln) through the transamidation of misacylated Glu-tRNA(Gln) in the mitochondria. The reaction takes place in the presence of glutamine and ATP through an activated gamma-phospho-Glu-tRNA(Gln). The sequence is that of Glutamyl-tRNA(Gln) amidotransferase subunit B, mitochondrial from Zygosaccharomyces rouxii (strain ATCC 2623 / CBS 732 / NBRC 1130 / NCYC 568 / NRRL Y-229).